The chain runs to 341 residues: tRNA N6-adenosine threonylcarbamoyltransferase (341 aa).

Fe cation contacts are provided by His111 and His115. Substrate is bound by residues 134–138 (LVSGG), Asp167, Gly180, and Asn276. Residue Asp304 coordinates Fe cation.

The protein belongs to the KAE1 / TsaD family. Requires Fe(2+) as cofactor.

The protein resides in the cytoplasm. The catalysed reaction is L-threonylcarbamoyladenylate + adenosine(37) in tRNA = N(6)-L-threonylcarbamoyladenosine(37) in tRNA + AMP + H(+). Functionally, required for the formation of a threonylcarbamoyl group on adenosine at position 37 (t(6)A37) in tRNAs that read codons beginning with adenine. Is involved in the transfer of the threonylcarbamoyl moiety of threonylcarbamoyl-AMP (TC-AMP) to the N6 group of A37, together with TsaE and TsaB. TsaD likely plays a direct catalytic role in this reaction. This Alteromonas mediterranea (strain DSM 17117 / CIP 110805 / LMG 28347 / Deep ecotype) protein is tRNA N6-adenosine threonylcarbamoyltransferase.